Reading from the N-terminus, the 173-residue chain is NAD(P)H-quinone oxidoreductase subunit J (173 aa).

The protein belongs to the complex I 30 kDa subunit family. NDH-1 can be composed of about 15 different subunits; different subcomplexes with different compositions have been identified which probably have different functions.

It localises to the cellular thylakoid membrane. It carries out the reaction a plastoquinone + NADH + (n+1) H(+)(in) = a plastoquinol + NAD(+) + n H(+)(out). The enzyme catalyses a plastoquinone + NADPH + (n+1) H(+)(in) = a plastoquinol + NADP(+) + n H(+)(out). In terms of biological role, NDH-1 shuttles electrons from an unknown electron donor, via FMN and iron-sulfur (Fe-S) centers, to quinones in the respiratory and/or the photosynthetic chain. The immediate electron acceptor for the enzyme in this species is believed to be plastoquinone. Couples the redox reaction to proton translocation, and thus conserves the redox energy in a proton gradient. Cyanobacterial NDH-1 also plays a role in inorganic carbon-concentration. The polypeptide is NAD(P)H-quinone oxidoreductase subunit J (Prochlorococcus marinus (strain NATL1A)).